The following is a 160-amino-acid chain: Ureidoglycolate lyase (160 aa).

This sequence belongs to the ureidoglycolate lyase family. Homodimer. The cofactor is Ni(2+).

It carries out the reaction (S)-ureidoglycolate = urea + glyoxylate. It functions in the pathway nitrogen metabolism; (S)-allantoin degradation. Functionally, catalyzes the catabolism of the allantoin degradation intermediate (S)-ureidoglycolate, generating urea and glyoxylate. Involved in the utilization of allantoin as nitrogen source. In Salmonella agona (strain SL483), this protein is Ureidoglycolate lyase.